Reading from the N-terminus, the 437-residue chain is Vasoactive intestinal polypeptide receptor 2 (437 aa).

The signal sequence occupies residues 1 to 22 (MRASVVLTCYCWLLVRVSSIHP). Topologically, residues 23 to 123 (ECRFHLEIQE…EDESKISFYI (101 aa)) are extracellular. Disulfide bonds link C37/C60, C51/C92, and C74/C108. Residues N57, N87, and N91 are each glycosylated (N-linked (GlcNAc...) asparagine). A helical transmembrane segment spans residues 124-149 (LVKAIYTLGYSVSLMSLTTGSIIICL). The Cytoplasmic portion of the chain corresponds to 150-157 (FRKLHCTR). A helical transmembrane segment spans residues 158–179 (NYIHLNLFLSFMLRAISVLVKD). The Extracellular portion of the chain corresponds to 180–202 (SVLYSSSGLLRCHDQPASWVGCK). C201 and C270 are disulfide-bonded. Residues 203-227 (LSLVFFQYCIMANFYWLLVEGLYLH) traverse the membrane as a helical segment. Topologically, residues 228 to 238 (TLLVAILPPSR) are cytoplasmic. A helical membrane pass occupies residues 239–260 (CFLAYLLIGWGIPSVCIGAWTA). At 261-279 (TRLSLEDTGCWDTNDHSIP) the chain is on the extracellular side. Residues 280 to 303 (WWVIRMPILISIVVNFALFISIVR) traverse the membrane as a helical segment. Over 304-324 (ILLQKLTSPDVGGNDQSQYKR) the chain is Cytoplasmic. Residues 325-345 (LAKSTLLLIPLFGVHYMVFAA) form a helical membrane-spanning segment. The Extracellular portion of the chain corresponds to 346–353 (FPIGISST). A helical membrane pass occupies residues 354 to 377 (YQILFELCVGSFQGLVVAVLYCFL). Residues 378–437 (NSEVQCELKRRWRGLCLTQAGSRDYRLHSWSMSRNGSESALQIHRGSRTQSFLQSETSVI) lie on the Cytoplasmic side of the membrane.

This sequence belongs to the G-protein coupled receptor 2 family. Interacts with ADCYAP1/PACAP (via N-terminal extracellular domain); activated by PACAP27 and CAPAC38 neuropeptides. Interacts with VIP; the interaction results in VIPR1 activation. In terms of tissue distribution, expressed at high levels in the MIN6 cells, at moderate levels in pancreatic islets, insulin-secreting cells, lung, brain, stomach, and colon, and at low levels in the heart.

It localises to the cell membrane. Its function is as follows. G protein-coupled receptor activated by the neuropeptides vasoactive intestinal peptide (VIP) and pituitary adenylate cyclase-activating polypeptide (ADCYAP1/PACAP). Binds VIP and both PACAP27 and PACAP38 bioactive peptides with the order of ligand affinity of VIP = PACAP38 &gt; PACAP27. Ligand binding causes a conformation change that triggers signaling via guanine nucleotide-binding proteins (G proteins) and modulates the activity of downstream effectors. Activates cAMP-dependent pathway. May be coupled to phospholipase C. This chain is Vasoactive intestinal polypeptide receptor 2, found in Mus musculus (Mouse).